We begin with the raw amino-acid sequence, 79 residues long: Tungsten-containing formylmethanofuran dehydrogenase 2 subunit G (79 aa).

2 consecutive 4Fe-4S ferredoxin-type domains span residues 2 to 31 (VKIV…SPNV) and 51 to 79 (TVSV…EIKT). The [4Fe-4S] cluster site is built by Cys-11, Cys-14, Cys-17, Cys-21, Cys-60, Cys-63, Cys-66, and Cys-70.

The cofactor is [4Fe-4S] cluster.

The enzyme catalyses N-formylmethanofuran + 2 oxidized [2Fe-2S]-[ferredoxin] + H2O = methanofuran + 2 reduced [2Fe-2S]-[ferredoxin] + CO2 + H(+). Its pathway is one-carbon metabolism; methanogenesis from CO(2); 5,10-methenyl-5,6,7,8-tetrahydromethanopterin from CO(2): step 1/3. Its activity is regulated as follows. Not inactivated by cyanide. Functionally, catalyzes the reversible oxidation of CO(2) and methanofuran (MFR) to N-formylmethanofuran (CHO-MFR). This enzyme is oxygen-labile. May function as an electron transfer protein. The sequence is that of Tungsten-containing formylmethanofuran dehydrogenase 2 subunit G (fwdG) from Methanopyrus kandleri (strain AV19 / DSM 6324 / JCM 9639 / NBRC 100938).